The chain runs to 113 residues: MGEHAIKRHMRQRKPTKHPLAQKRGARILVLTDDPRRSVLIVPGCHLDSMRREKNAYYFQDGNALVGMVVSGGTVEYDADDRTYVVQLTDGRHTTESSFEHSSPSRSPQSDDL.

2 disordered regions span residues 1-22 (MGEHAIKRHMRQRKPTKHPLAQ) and 90-113 (DGRHTTESSFEHSSPSRSPQSDDL). Residues 90 to 99 (DGRHTTESSF) are compositionally biased toward basic and acidic residues. The segment covering 100–113 (EHSSPSRSPQSDDL) has biased composition (low complexity).

This is an uncharacterized protein from Mycobacterium tuberculosis (strain CDC 1551 / Oshkosh).